We begin with the raw amino-acid sequence, 340 residues long: Ketol-acid reductoisomerase (NADP(+)) (340 aa).

One can recognise a KARI N-terminal Rossmann domain in the interval 3–183; that stretch reads LPIYYDKDCD…GGGRTGIIHT (181 aa). NADP(+) is bound by residues 26–29, Ser54, and 84–87; these read FGSQ and DEIQ. His109 is an active-site residue. Position 135 (Gly135) interacts with NADP(+). The region spanning 184-329 is the KARI C-terminal knotted domain; it reads TFKDETETDL…KRLRAMMPWI (146 aa). Asp192, Glu196, Glu228, and Glu232 together coordinate Mg(2+). A substrate-binding site is contributed by Ser253.

This sequence belongs to the ketol-acid reductoisomerase family. Mg(2+) is required as a cofactor.

The enzyme catalyses (2R)-2,3-dihydroxy-3-methylbutanoate + NADP(+) = (2S)-2-acetolactate + NADPH + H(+). It carries out the reaction (2R,3R)-2,3-dihydroxy-3-methylpentanoate + NADP(+) = (S)-2-ethyl-2-hydroxy-3-oxobutanoate + NADPH + H(+). It participates in amino-acid biosynthesis; L-isoleucine biosynthesis; L-isoleucine from 2-oxobutanoate: step 2/4. Its pathway is amino-acid biosynthesis; L-valine biosynthesis; L-valine from pyruvate: step 2/4. Functionally, involved in the biosynthesis of branched-chain amino acids (BCAA). Catalyzes an alkyl-migration followed by a ketol-acid reduction of (S)-2-acetolactate (S2AL) to yield (R)-2,3-dihydroxy-isovalerate. In the isomerase reaction, S2AL is rearranged via a Mg-dependent methyl migration to produce 3-hydroxy-3-methyl-2-ketobutyrate (HMKB). In the reductase reaction, this 2-ketoacid undergoes a metal-dependent reduction by NADPH to yield (R)-2,3-dihydroxy-isovalerate. The protein is Ketol-acid reductoisomerase (NADP(+)) of Nitratiruptor sp. (strain SB155-2).